Here is a 268-residue protein sequence, read N- to C-terminus: uncharacterized protein (268 aa).

It to yeast YKR075c.

This is an uncharacterized protein from Saccharomyces cerevisiae (strain ATCC 204508 / S288c) (Baker's yeast).